The chain runs to 290 residues: Protease HtpX homolog (290 aa).

2 consecutive transmembrane segments (helical) span residues 4-24 and 39-59; these read IFLF…VLSL and PMLL…SLLI. H144 provides a ligand contact to Zn(2+). Residue E145 is part of the active site. H148 is a Zn(2+) binding site. 2 helical membrane-spanning segments follow: residues 159–179 and 197–217; these read LVQG…GYFV and ITVI…VAWF. E222 is a Zn(2+) binding site.

This sequence belongs to the peptidase M48B family. Requires Zn(2+) as cofactor.

The protein resides in the cell inner membrane. The chain is Protease HtpX homolog from Janthinobacterium sp. (strain Marseille) (Minibacterium massiliensis).